Consider the following 439-residue polypeptide: F-box/FBD/LRR-repeat protein At5g56570 (439 aa).

Residues 35 to 81 (PTELSDMPDDLIFKIFSFLPFFKEDLATRFISEYGKGLWNPDPNAIF) enclose the F-box domain. LRR repeat units lie at residues 155–177 (CTTL…WFRL) and 223–246 (VPTL…SFWI). The FBD domain occupies 361-411 (VWEKPTVVPECLSTRLEILKWRDYEGTEHEKDMVGYILANATFLQRATFST).

This is F-box/FBD/LRR-repeat protein At5g56570 from Arabidopsis thaliana (Mouse-ear cress).